The following is an 82-amino-acid chain: Delta-ctenitoxin-Pn1a (82 aa).

Positions 1-16 are cleaved as a signal peptide; the sequence is MKVAIVFLSLLVLAFA. Residues 17–34 constitute a propeptide that is removed on maturation; sequence SESIEENREEFPVEESAR. Disulfide bonds link Cys35-Cys49, Cys42-Cys55, Cys46-Cys82, Cys48-Cys65, and Cys57-Cys63.

This sequence belongs to the neurotoxin 03 (Tx2) family. 05 subfamily. In terms of tissue distribution, expressed by the venom gland.

It is found in the secreted. Its function is as follows. This neurotoxin binds at site 3 of insect voltage-activated sodium channels (Nav) and prolongs evoked axonal action potentials by a slowing down of sodium current inactivation. The toxin also inhibits glutamate uptake from rat brain synaptosomes. It reversibly inhibits the N-methyl-D-aspartate (NMDA)-subtype of ionotropic glutamate receptor (GRIN). In addition, the toxin shows antinociceptive effect in all rat pain models tested (inflammatory, neuropathic and nociceptive). The antinociceptive effect is partially blocked when selective antagonists of both mu- and delta-opioid receptors are administered, revealing that the antinociceptive effect of the toxin involves both opioid and cannabinoid endogenous systems. In vivo, it is highly toxic to house fly (Musca domestica), toxic to cockroach, but has no effect when intracerebroventricularly injected into mice. This is Delta-ctenitoxin-Pn1a from Phoneutria nigriventer (Brazilian armed spider).